The sequence spans 426 residues: Serine--tRNA ligase (426 aa).

An L-serine-binding site is contributed by 229–231 (TAE). 260 to 262 (RSE) contributes to the ATP binding site. Position 283 (Glu283) interacts with L-serine. An ATP-binding site is contributed by 347–350 (EIAS). Position 383 (Ser383) interacts with L-serine.

Belongs to the class-II aminoacyl-tRNA synthetase family. Type-1 seryl-tRNA synthetase subfamily. In terms of assembly, homodimer. The tRNA molecule binds across the dimer.

The protein resides in the cytoplasm. The enzyme catalyses tRNA(Ser) + L-serine + ATP = L-seryl-tRNA(Ser) + AMP + diphosphate + H(+). The catalysed reaction is tRNA(Sec) + L-serine + ATP = L-seryl-tRNA(Sec) + AMP + diphosphate + H(+). It participates in aminoacyl-tRNA biosynthesis; selenocysteinyl-tRNA(Sec) biosynthesis; L-seryl-tRNA(Sec) from L-serine and tRNA(Sec): step 1/1. In terms of biological role, catalyzes the attachment of serine to tRNA(Ser). Is also able to aminoacylate tRNA(Sec) with serine, to form the misacylated tRNA L-seryl-tRNA(Sec), which will be further converted into selenocysteinyl-tRNA(Sec). The protein is Serine--tRNA ligase of Rickettsia bellii (strain OSU 85-389).